Reading from the N-terminus, the 397-residue chain is Subtilisin-like protease 3 (397 aa).

The signal sequence occupies residues 1-19 (MGCIKVISVFLAAIAAVDA). A propeptide spanning residues 20-116 (RAFFHNRGGS…VEHDRVVKLA (97 aa)) is cleaved from the precursor. The Inhibitor I9 domain maps to 35–116 (SYIVVMKDGV…VEHDRVVKLA (82 aa)). The Peptidase S8 domain occupies 126–397 (TWGLGRVSHR…NRLLYNGSGQ (272 aa)). Residues Asp-158 and His-189 each act as charge relay system in the active site. N-linked (GlcNAc...) asparagine glycosylation occurs at Asn-250. The active-site Charge relay system is Ser-344. N-linked (GlcNAc...) asparagine glycosylation is present at Asn-393.

The protein belongs to the peptidase S8 family.

It is found in the secreted. In terms of biological role, secreted subtilisin-like serine protease with keratinolytic activity that contributes to pathogenicity. The protein is Subtilisin-like protease 3 (SUB3) of Trichophyton tonsurans (Scalp ringworm fungus).